A 169-amino-acid polypeptide reads, in one-letter code: Phycobiliprotein beta chain (169 aa).

N72 is modified (N4-methylasparagine). Residue C82 participates in (2R,3E)-phycocyanobilin binding.

Belongs to the phycobiliprotein family. In terms of assembly, heterodimer of an alpha and a beta chain. Contains one covalently linked bilin chromophore.

Its subcellular location is the cellular thylakoid membrane. Light-harvesting photosynthetic bile pigment-protein from the phycobiliprotein complex. This is a protein functionally equivalent to, but with weaker absorbance than, allophycocyanin beta chain. This is Phycobiliprotein beta chain (apcD) from Mastigocladus laminosus (Fischerella sp.).